Reading from the N-terminus, the 173-residue chain is dCTP deaminase, dUMP-forming (173 aa).

Residues 93-98, D111, 119-121, Q138, and Y151 each bind dCTP; these read RSSIGR and TLE. E121 acts as the Proton donor/acceptor in catalysis.

The protein belongs to the dCTP deaminase family. As to quaternary structure, homotrimer.

The catalysed reaction is dCTP + 2 H2O = dUMP + NH4(+) + diphosphate. The protein operates within pyrimidine metabolism; dUMP biosynthesis; dUMP from dCTP: step 1/1. Bifunctional enzyme that catalyzes both the deamination of dCTP to dUTP and the hydrolysis of dUTP to dUMP without releasing the toxic dUTP intermediate. The polypeptide is dCTP deaminase, dUMP-forming (Clostridium acetobutylicum (strain ATCC 824 / DSM 792 / JCM 1419 / IAM 19013 / LMG 5710 / NBRC 13948 / NRRL B-527 / VKM B-1787 / 2291 / W)).